The sequence spans 474 residues: Glycogen synthase (474 aa).

Lys15 provides a ligand contact to ADP-alpha-D-glucose.

Belongs to the glycosyltransferase 1 family. Bacterial/plant glycogen synthase subfamily.

The catalysed reaction is [(1-&gt;4)-alpha-D-glucosyl](n) + ADP-alpha-D-glucose = [(1-&gt;4)-alpha-D-glucosyl](n+1) + ADP + H(+). It participates in glycan biosynthesis; glycogen biosynthesis. Functionally, synthesizes alpha-1,4-glucan chains using ADP-glucose. This Chlamydia trachomatis serovar D (strain ATCC VR-885 / DSM 19411 / UW-3/Cx) protein is Glycogen synthase.